Here is a 934-residue protein sequence, read N- to C-terminus: Coiled-coil domain-containing protein 39 (934 aa).

4 coiled-coil regions span residues 17–133 (IPVA…DGLK), 164–512 (SQQD…HNDL), 540–615 (VDRS…SQIR), and 664–826 (VIKA…EQDI). The tract at residues 866-934 (LPTAKGPSSR…NIPKGKKLNK (69 aa)) is disordered. Over residues 873–892 (SSRSSSQSSLSSIRSLEDSI) the composition is skewed to low complexity. 2 positions are modified to phosphoserine: Ser-887 and Ser-895. Residues 912 to 925 (RSDSSRSSSGSNSN) are compositionally biased toward low complexity.

Belongs to the CCDC39 family.

It is found in the cytoplasm. The protein resides in the cytoskeleton. It localises to the cilium axoneme. Functionally, required for assembly of dynein regulatory complex (DRC) and inner dynein arm (IDA) complexes, which are responsible for ciliary beat regulation, thereby playing a central role in motility in cilia and flagella. Probably acts together with CCDC40 to form a molecular ruler that determines the 96 nanometer (nm) repeat length and arrangements of components in cilia and flagella. Not required for outer dynein arm complexes assembly. The polypeptide is Coiled-coil domain-containing protein 39 (Ccdc39) (Rattus norvegicus (Rat)).